The following is a 927-amino-acid chain: Bifunctional glutamine synthetase adenylyltransferase/adenylyl-removing enzyme (927 aa).

An adenylyl removase region spans residues 1–428 (MTMTDASDLL…AQFDQVFADK (428 aa)). The interval 438–927 (DQAAGCIWSG…AALWARVFGA (490 aa)) is adenylyl transferase.

The protein belongs to the GlnE family. Mg(2+) serves as cofactor.

It catalyses the reaction [glutamine synthetase]-O(4)-(5'-adenylyl)-L-tyrosine + phosphate = [glutamine synthetase]-L-tyrosine + ADP. It carries out the reaction [glutamine synthetase]-L-tyrosine + ATP = [glutamine synthetase]-O(4)-(5'-adenylyl)-L-tyrosine + diphosphate. Functionally, involved in the regulation of glutamine synthetase GlnA, a key enzyme in the process to assimilate ammonia. When cellular nitrogen levels are high, the C-terminal adenylyl transferase (AT) inactivates GlnA by covalent transfer of an adenylyl group from ATP to specific tyrosine residue of GlnA, thus reducing its activity. Conversely, when nitrogen levels are low, the N-terminal adenylyl removase (AR) activates GlnA by removing the adenylyl group by phosphorolysis, increasing its activity. The regulatory region of GlnE binds the signal transduction protein PII (GlnB) which indicates the nitrogen status of the cell. The polypeptide is Bifunctional glutamine synthetase adenylyltransferase/adenylyl-removing enzyme (Burkholderia pseudomallei (strain K96243)).